The primary structure comprises 618 residues: Proline--tRNA ligase (618 aa).

The protein belongs to the class-II aminoacyl-tRNA synthetase family. ProS type 1 subfamily. In terms of assembly, homodimer.

Its subcellular location is the cytoplasm. The enzyme catalyses tRNA(Pro) + L-proline + ATP = L-prolyl-tRNA(Pro) + AMP + diphosphate. In terms of biological role, catalyzes the attachment of proline to tRNA(Pro) in a two-step reaction: proline is first activated by ATP to form Pro-AMP and then transferred to the acceptor end of tRNA(Pro). As ProRS can inadvertently accommodate and process non-cognate amino acids such as alanine and cysteine, to avoid such errors it has two additional distinct editing activities against alanine. One activity is designated as 'pretransfer' editing and involves the tRNA(Pro)-independent hydrolysis of activated Ala-AMP. The other activity is designated 'posttransfer' editing and involves deacylation of mischarged Ala-tRNA(Pro). The misacylated Cys-tRNA(Pro) is not edited by ProRS. The polypeptide is Proline--tRNA ligase (Streptococcus pyogenes serotype M28 (strain MGAS6180)).